The following is a 322-amino-acid chain: Epoxide hydrolase A (322 aa).

Residues P27–L131 form the AB hydrolase-1 domain. The Nucleophile role is filled by D103. H298 (proton acceptor) is an active-site residue.

Belongs to the AB hydrolase superfamily. Epoxide hydrolase family. Homodimer.

It catalyses the reaction an epoxide + H2O = an ethanediol. Could be involved in detoxification of extraneous host-cell epoxides. Catalyzes the hydrolysis of epoxide-containing substrates. The protein is Epoxide hydrolase A (ephA) of Mycobacterium tuberculosis (strain ATCC 25618 / H37Rv).